The following is a 392-amino-acid chain: Bifunctional enzyme Fae/Hps (392 aa).

The interval 1 to 161 is formaldehyde-activating enzyme; that stretch reads MFQIGEALMG…EESNKSTHAI (161 aa). Histidine 17 acts as the Proton donor in catalysis. Residues aspartate 19, leucine 48, lysine 66, threonine 68, and glutamine 83 each coordinate substrate. The tract at residues 162–392 is 3-hexulose-6-phosphate synthase; that stretch reads MGFKVTRLWD…IDQFRVMTDF (231 aa).

The protein in the N-terminal section; belongs to the formaldehyde-activating enzyme family. This sequence in the C-terminal section; belongs to the HPS/KGPDC family. HPS subfamily.

The catalysed reaction is 5,6,7,8-tetrahydromethanopterin + formaldehyde = 5,10-methylenetetrahydromethanopterin + H2O. The enzyme catalyses D-ribulose 5-phosphate + formaldehyde = D-arabino-hex-3-ulose 6-phosphate. It functions in the pathway carbohydrate biosynthesis; D-ribose 5-phosphate biosynthesis. Functionally, catalyzes the condensation of formaldehyde with tetrahydromethanopterin (H(4)MPT) to 5,10-methylenetetrahydromethanopterin. Catalyzes the reversible formation of ribulose-5-phosphate and formaldehyde from 3-hexulose-6-phosphate. The polypeptide is Bifunctional enzyme Fae/Hps (Methanosarcina barkeri (strain Fusaro / DSM 804)).